Consider the following 404-residue polypeptide: tRNA pseudouridine(31) synthase (404 aa).

Asp-168 is a catalytic residue.

The protein belongs to the pseudouridine synthase RluA family.

The protein resides in the cytoplasm. Its subcellular location is the mitochondrion. It catalyses the reaction uridine(31) in tRNA = pseudouridine(31) in tRNA. Its function is as follows. Catalyzes the formation of pseudouridine at position 31 in the psi GC loop of tRNAS. This is tRNA pseudouridine(31) synthase (PUS6) from Saccharomyces cerevisiae (strain ATCC 204508 / S288c) (Baker's yeast).